The primary structure comprises 438 residues: Glutamine synthetase (438 aa).

In terms of domain architecture, GS beta-grasp spans E14–T98. The GS catalytic domain maps to P106 to Q438. Mg(2+) is bound by residues E130 and E132. D208 lines the ATP pocket. Mg(2+) is bound by residues E213 and E220. Residues N264–G265 and G265 each bind L-glutamate. Residue H269 coordinates Mg(2+). Residues N271–S273 and S273 contribute to the ATP site. Residues R321, E327, and R339 each coordinate L-glutamate. R339, R344, and K352 together coordinate ATP. A Mg(2+)-binding site is contributed by E357. Position 359 (R359) interacts with L-glutamate. Y397 bears the O-AMP-tyrosine mark.

It belongs to the glutamine synthetase family. In terms of assembly, oligomer of 12 subunits arranged in the form of two hexameric ring. It depends on Mg(2+) as a cofactor.

It is found in the cytoplasm. It catalyses the reaction L-glutamate + NH4(+) + ATP = L-glutamine + ADP + phosphate + H(+). With respect to regulation, the activity of this enzyme could be controlled by adenylation under conditions of abundant glutamine. Its function is as follows. Catalyzes the ATP-dependent biosynthesis of glutamine from glutamate and ammonia. The chain is Glutamine synthetase from Rhodobacter capsulatus (Rhodopseudomonas capsulata).